The sequence spans 254 residues: Transmembrane protein 269 (254 aa).

5 helical membrane-spanning segments follow: residues 44 to 64, 69 to 89, 113 to 135, 171 to 191, and 210 to 230; these read IINA…FCSF, YCAS…GTMT, LASA…IYVL, LTKG…LFMI, and IVYI…TAFY.

The protein localises to the membrane. The protein is Transmembrane protein 269 of Mus musculus (Mouse).